The primary structure comprises 410 residues: Histidine--tRNA ligase (410 aa).

The protein belongs to the class-II aminoacyl-tRNA synthetase family. As to quaternary structure, homodimer.

The protein localises to the cytoplasm. It catalyses the reaction tRNA(His) + L-histidine + ATP = L-histidyl-tRNA(His) + AMP + diphosphate + H(+). This chain is Histidine--tRNA ligase, found in Campylobacter hominis (strain ATCC BAA-381 / DSM 21671 / CCUG 45161 / LMG 19568 / NCTC 13146 / CH001A).